Consider the following 132-residue polypeptide: Acid shock protein (132 aa).

Residues 1–21 (MKKVLALIVAATMGLSSVAFA) form the signal peptide. The propeptide occupies 22 to 69 (AETTAAATAAPAATSTTAAPAVEKAAPAKATHHKKHKATKQTTEQKAQ). Residues 30–50 (AAPAATSTTAAPAVEKAAPAK) are compositionally biased toward low complexity. The segment at 30-132 (AAPAATSTTA…AKKSATAPAA (103 aa)) is disordered. Basic residues predominate over residues 51-60 (ATHHKKHKAT). Positions 61–99 (KQTTEQKAQAAKKAVKKAPAQKAQAAKKAVKKAPVQKAQ) are enriched in low complexity. Basic residues predominate over residues 100-124 (AAKKHVKKAPAQKAQAAKKHHKTAK).

This sequence belongs to the Asr family. In terms of processing, proteolytic processing gives rise to the active protein.

The protein localises to the periplasm. Required for growth and/or survival at acidic conditions. The chain is Acid shock protein from Yersinia enterocolitica serotype O:8 / biotype 1B (strain NCTC 13174 / 8081).